A 590-amino-acid chain; its full sequence is Aspartate--tRNA(Asp/Asn) ligase (590 aa).

Glutamate 175 lines the L-aspartate pocket. Residues 199-202 (QQYK) are aspartate. L-aspartate is bound by residues arginine 221 and histidine 450. Residue 221 to 223 (RDE) coordinates ATP. Glutamate 484 contacts ATP. Arginine 491 is an L-aspartate binding site. 536 to 539 (GVDR) serves as a coordination point for ATP.

Belongs to the class-II aminoacyl-tRNA synthetase family. Type 1 subfamily. In terms of assembly, homodimer.

It localises to the cytoplasm. It carries out the reaction tRNA(Asx) + L-aspartate + ATP = L-aspartyl-tRNA(Asx) + AMP + diphosphate. Aspartyl-tRNA synthetase with relaxed tRNA specificity since it is able to aspartylate not only its cognate tRNA(Asp) but also tRNA(Asn). Reaction proceeds in two steps: L-aspartate is first activated by ATP to form Asp-AMP and then transferred to the acceptor end of tRNA(Asp/Asn). The sequence is that of Aspartate--tRNA(Asp/Asn) ligase from Rhodopseudomonas palustris (strain HaA2).